Reading from the N-terminus, the 593-residue chain is Dihydroxy-acid dehydratase (593 aa).

Positions 1–17 (MSQQTEPDDDAALDGDE) are enriched in acidic residues. The tract at residues 1-40 (MSQQTEPDDDAALDGDEPGAYGKDERLRSREVTEGPERAP) is disordered. Residues 22–40 (GKDERLRSREVTEGPERAP) are compositionally biased toward basic and acidic residues. C72 is a [2Fe-2S] cluster binding site. A Mg(2+)-binding site is contributed by D104. C145 serves as a coordination point for [2Fe-2S] cluster. Mg(2+) contacts are provided by D146 and K147. K147 bears the N6-carboxylysine mark. C217 contributes to the [2Fe-2S] cluster binding site. E475 contacts Mg(2+). The active-site Proton acceptor is S501.

Belongs to the IlvD/Edd family. Homodimer. It depends on [2Fe-2S] cluster as a cofactor. Requires Mg(2+) as cofactor.

It carries out the reaction (2R)-2,3-dihydroxy-3-methylbutanoate = 3-methyl-2-oxobutanoate + H2O. It catalyses the reaction (2R,3R)-2,3-dihydroxy-3-methylpentanoate = (S)-3-methyl-2-oxopentanoate + H2O. It functions in the pathway amino-acid biosynthesis; L-isoleucine biosynthesis; L-isoleucine from 2-oxobutanoate: step 3/4. It participates in amino-acid biosynthesis; L-valine biosynthesis; L-valine from pyruvate: step 3/4. Functionally, functions in the biosynthesis of branched-chain amino acids. Catalyzes the dehydration of (2R,3R)-2,3-dihydroxy-3-methylpentanoate (2,3-dihydroxy-3-methylvalerate) into 2-oxo-3-methylpentanoate (2-oxo-3-methylvalerate) and of (2R)-2,3-dihydroxy-3-methylbutanoate (2,3-dihydroxyisovalerate) into 2-oxo-3-methylbutanoate (2-oxoisovalerate), the penultimate precursor to L-isoleucine and L-valine, respectively. This is Dihydroxy-acid dehydratase from Natronomonas pharaonis (strain ATCC 35678 / DSM 2160 / CIP 103997 / JCM 8858 / NBRC 14720 / NCIMB 2260 / Gabara) (Halobacterium pharaonis).